The sequence spans 175 residues: ATP synthase subunit b (175 aa).

Residues 20–40 (LIFWTAVTFVIVLLILKQLAW) form a helical membrane-spanning segment.

This sequence belongs to the ATPase B chain family. F-type ATPases have 2 components, F(1) - the catalytic core - and F(0) - the membrane proton channel. F(1) has five subunits: alpha(3), beta(3), gamma(1), delta(1), epsilon(1). F(0) has four main subunits: a(1), b(2) and c(10-14). The alpha and beta chains form an alternating ring which encloses part of the gamma chain. F(1) is attached to F(0) by a central stalk formed by the gamma and epsilon chains, while a peripheral stalk is formed by the delta and b chains.

It localises to the cell inner membrane. F(1)F(0) ATP synthase produces ATP from ADP in the presence of a proton or sodium gradient. F-type ATPases consist of two structural domains, F(1) containing the extramembraneous catalytic core and F(0) containing the membrane proton channel, linked together by a central stalk and a peripheral stalk. During catalysis, ATP synthesis in the catalytic domain of F(1) is coupled via a rotary mechanism of the central stalk subunits to proton translocation. Its function is as follows. Component of the F(0) channel, it forms part of the peripheral stalk, linking F(1) to F(0). The protein is ATP synthase subunit b of Chlorobium limicola (strain DSM 245 / NBRC 103803 / 6330).